We begin with the raw amino-acid sequence, 176 residues long: NAD(P)H-quinone oxidoreductase subunit J (176 aa).

The protein belongs to the complex I 30 kDa subunit family. As to quaternary structure, NDH-1 can be composed of about 15 different subunits; different subcomplexes with different compositions have been identified which probably have different functions.

The protein resides in the cell inner membrane. The enzyme catalyses a plastoquinone + NADH + (n+1) H(+)(in) = a plastoquinol + NAD(+) + n H(+)(out). The catalysed reaction is a plastoquinone + NADPH + (n+1) H(+)(in) = a plastoquinol + NADP(+) + n H(+)(out). In terms of biological role, NDH-1 shuttles electrons from an unknown electron donor, via FMN and iron-sulfur (Fe-S) centers, to quinones in the respiratory and/or the photosynthetic chain. The immediate electron acceptor for the enzyme in this species is believed to be plastoquinone. Couples the redox reaction to proton translocation, and thus conserves the redox energy in a proton gradient. Cyanobacterial NDH-1 also plays a role in inorganic carbon-concentration. This chain is NAD(P)H-quinone oxidoreductase subunit J, found in Gloeobacter violaceus (strain ATCC 29082 / PCC 7421).